Consider the following 158-residue polypeptide: MGRFLLVTLSLLVVAFSLNGANNCCCPQDWLPKNGYCYKVFKDHKSWDDAEMFCRKLKPGCHLASLHSNADAFDFSEYITDYLTGHDHVWIGLRDTEKNYIWEWTDRSRTDFLPWKKDQPDHHNNDEFCVEIVSFTGYLQWNDDSCTALRPFLCQCKH.

The signal sequence occupies residues 1–20; it reads MGRFLLVTLSLLVVAFSLNG. Cystine bridges form between Cys26/Cys37, Cys54/Cys154, and Cys129/Cys146. The 123-residue stretch at 33-155 folds into the C-type lectin domain; that stretch reads KNGYCYKVFK…CTALRPFLCQ (123 aa). Residues Gln119, Asp121, Glu127, Asn142, and Asp143 each coordinate Ca(2+). The Galactose-binding motif lies at 119–121; that stretch reads QPD.

Belongs to the true venom lectin family. In terms of assembly, homodimer; disulfide-linked. In terms of tissue distribution, expressed by the venom gland.

The protein localises to the secreted. In terms of biological role, galactose-binding lectin that binds to and agglutinates erythrocytes in a calcium-dependent manner. The polypeptide is C-type lectin galactose-binding isoform (Hoplocephalus stephensii (Stephens's banded snake)).